The sequence spans 309 residues: Mitochondrial phosphate carrier protein 1, mitochondrial (309 aa).

The Mitochondrial intermembrane portion of the chain corresponds to 1-15 (MTRVKSKLDEELSSP). The helical transmembrane segment at 16–36 (WFYTVCTMGGMLSAGTTHLAI) threads the bilayer. Solcar repeat units follow at residues 16–100 (WFYT…FKTL), 109–193 (NRTS…SVEF), and 210–289 (QQLG…IKVL). The Mitochondrial matrix portion of the chain corresponds to 37-74 (TPLDVLKVNMQVNPVKYNSIPSGFSTLLREHGHSYLWR). A helical transmembrane segment spans residues 75–94 (GWSGKLLGYGVQGGCRFGLY). Over 95 to 111 (EYFKTLYSDVLPNHNRT) the chain is Mitochondrial intermembrane. A helical membrane pass occupies residues 112–132 (SIYFLSSASAQIFADMALCPF). Residues 133–167 (EAIKVRVQTQPMFAKGLLDGFPRVYRSEGLAGFHR) are Mitochondrial matrix-facing. The helical transmembrane segment at 168-187 (GLFPLWCRNLPFSMVMFSTF) threads the bilayer. Over 188–208 (EQSVEFIYQKIIQKRKQDCSK) the chain is Mitochondrial intermembrane. Residues 209-229 (AQQLGVTCLAGYTAGAVGTII) traverse the membrane as a helical segment. Over 230-268 (SNPADVVLSSLYNNKAKNVLQAVRNIGFVGLFTRSLPVR) the chain is Mitochondrial matrix. Residues 269–289 (ITIVGPVITLQWFFYDAIKVL) traverse the membrane as a helical segment. Over 290–309 (SGFPTSGGVKKPVDAAKLSV) the chain is Mitochondrial intermembrane.

It belongs to the mitochondrial carrier (TC 2.A.29) family. Expressed in stems, leaves and flowers. Strong expression in the stamens of flowers.

Its subcellular location is the mitochondrion inner membrane. Its function is as follows. Transport of phosphate groups from the cytosol to the mitochondrial matrix. Mediates salt stress tolerance through an ATP-dependent pathway and via modulation of the gibberellin metabolism. The polypeptide is Mitochondrial phosphate carrier protein 1, mitochondrial (MPT1) (Arabidopsis thaliana (Mouse-ear cress)).